Consider the following 571-residue polypeptide: Membrane protein insertase YidC (571 aa).

The helical transmembrane segment at 4–24 threads the bilayer; the sequence is TRVFLIFAWLMVAVLLWMEWS. The interval 29-78 is disordered; that stretch reads APTPAPTTTSAPAAAQSVPGANPGAIPSAQVPGAPGQAAAQAQASATPAS. Low complexity-rich tracts occupy residues 34–43 and 55–78; these read PTTTSAPAAA and PSAQVPGAPGQAAAQAQASATPAS. 4 helical membrane-spanning segments follow: residues 369–389, 440–460, 483–503, and 518–538; these read LVGNWGWAIVGLVVLLKLVLY, GGCLPILIQMPIFFALYWVLV, YFILPVINVAVMWFTQKLTPA, and PLVFGVMMAFMPSGLVLYWVV.

The protein belongs to the OXA1/ALB3/YidC family. Type 1 subfamily. As to quaternary structure, interacts with the Sec translocase complex via SecD. Specifically interacts with transmembrane segments of nascent integral membrane proteins during membrane integration.

It is found in the cell inner membrane. Functionally, required for the insertion and/or proper folding and/or complex formation of integral membrane proteins into the membrane. Involved in integration of membrane proteins that insert both dependently and independently of the Sec translocase complex, as well as at least some lipoproteins. Aids folding of multispanning membrane proteins. The chain is Membrane protein insertase YidC from Stenotrophomonas maltophilia (strain K279a).